The following is an 89-amino-acid chain: Small ribosomal subunit protein uS15 (89 aa).

Residues 1 to 18 (MSLDTAEKQKLIENHQVH) show a composition bias toward basic and acidic residues. The segment at 1 to 23 (MSLDTAEKQKLIENHQVHPTDTG) is disordered.

This sequence belongs to the universal ribosomal protein uS15 family. In terms of assembly, part of the 30S ribosomal subunit. Forms a bridge to the 50S subunit in the 70S ribosome, contacting the 23S rRNA.

Functionally, one of the primary rRNA binding proteins, it binds directly to 16S rRNA where it helps nucleate assembly of the platform of the 30S subunit by binding and bridging several RNA helices of the 16S rRNA. In terms of biological role, forms an intersubunit bridge (bridge B4) with the 23S rRNA of the 50S subunit in the ribosome. This Prochlorococcus marinus (strain AS9601) protein is Small ribosomal subunit protein uS15.